Here is a 141-residue protein sequence, read N- to C-terminus: Nucleoside diphosphate kinase (141 aa).

Residues Lys10, Phe58, Arg86, Thr92, Arg103, and Asn113 each coordinate ATP. The Pros-phosphohistidine intermediate role is filled by His116.

This sequence belongs to the NDK family. In terms of assembly, homotetramer. Mg(2+) serves as cofactor.

Its subcellular location is the cytoplasm. The catalysed reaction is a 2'-deoxyribonucleoside 5'-diphosphate + ATP = a 2'-deoxyribonucleoside 5'-triphosphate + ADP. It catalyses the reaction a ribonucleoside 5'-diphosphate + ATP = a ribonucleoside 5'-triphosphate + ADP. Functionally, major role in the synthesis of nucleoside triphosphates other than ATP. The ATP gamma phosphate is transferred to the NDP beta phosphate via a ping-pong mechanism, using a phosphorylated active-site intermediate. The protein is Nucleoside diphosphate kinase of Hydrogenovibrio crunogenus (strain DSM 25203 / XCL-2) (Thiomicrospira crunogena).